The sequence spans 659 residues: ATP-binding cassette sub-family D member 3 (659 aa).

Positions 1-61 are interaction with PEX19; sequence MAAFSKYLTA…GKKERAVVDK (61 aa). Asn12 carries N-linked (GlcNAc...) asparagine glycosylation. Lys61 is modified (N6-acetyllysine). Residues 84 to 104 form a helical membrane-spanning segment; that stretch reads GYLLLIAVMLVSRTYCDVWMI. Positions 85-372 constitute an ABC transmembrane type-1 domain; the sequence is YLLLIAVMLV…MLLRMSQALG (288 aa). N-linked (GlcNAc...) asparagine glycosylation is present at Asn106. A helical membrane pass occupies residues 126–146; sequence LFNFIAAMPLISLVNNFLKYG. N-linked (GlcNAc...) asparagine glycosylation is present at Asn206. The helical transmembrane segment at 224-244 threads the bilayer; sequence AIGAQGPASMMAYLLVSGLFL. Residue Lys260 is modified to N6-acetyllysine. Residues 313–333 form a helical membrane-spanning segment; sequence MGFIDSIIAKYVATVVGYLVV. N6-acetyllysine is present on Lys399. The residue at position 424 (Ser424) is a Phosphoserine. The 226-residue stretch at 434 to 659 folds into the ABC transporter domain; that stretch reads INTDNIIKFD…ITEDTVEFGS (226 aa). 473-480 lines the ATP pocket; that stretch reads GPNGCGKS. Lys533 is modified (N6-acetyllysine). Ser659 bears the Phosphoserine mark.

Belongs to the ABC transporter superfamily. ABCD family. Peroxisomal fatty acyl CoA transporter (TC 3.A.1.203) subfamily. As to quaternary structure, homodimers. Can form heterodimers with ABCD1 and ABCD2. Dimerization is necessary to form an active transporter. Interacts with PEX19; mediates the targeting of ABCD3 to peroxisomes. In terms of processing, ubiquitinated by PEX2 during pexophagy in response to starvation, leading to its degradation.

It is found in the peroxisome membrane. The catalysed reaction is a very long-chain fatty acyl-CoA + H2O = a very long-chain fatty acid + CoA + H(+). It catalyses the reaction a very long-chain fatty acid(in) + ATP + H2O = a very long-chain fatty acid(out) + ADP + phosphate + H(+). The enzyme catalyses a long-chain fatty acyl-CoA + H2O = a long-chain fatty acid + CoA + H(+). It carries out the reaction a long-chain fatty acid(in) + ATP + H2O = a long-chain fatty acid(out) + ADP + phosphate + H(+). The catalysed reaction is pristanoyl-CoA + H2O = 2,6,10,14-tetramethylpentadecanoate + CoA + H(+). It catalyses the reaction 2,6,10,14-tetramethylpentadecanoate(in) + ATP + H2O = 2,6,10,14-tetramethylpentadecanoate(out) + ADP + phosphate + H(+). The enzyme catalyses hexadecanedioyl-CoA + H2O = hexadecanedioate + CoA + H(+). It carries out the reaction hexadecanedioate(in) + ATP + H2O = hexadecanedioate(out) + ADP + phosphate + H(+). The catalysed reaction is (5Z,8Z,11Z,14Z,17Z)-eicosapentaenoyl-CoA + H2O = (5Z,8Z,11Z,14Z,17Z)-eicosapentaenoate + CoA + H(+). It catalyses the reaction (5Z,8Z,11Z,14Z,17Z)-eicosapentaenoate(in) + ATP + H2O = (5Z,8Z,11Z,14Z,17Z)-eicosapentaenoate(out) + ADP + phosphate + H(+). The enzyme catalyses (4Z,7Z,10Z,13Z,16Z,19Z)-docosahexaenoyl-CoA + H2O = (4Z,7Z,10Z,13Z,16Z,19Z)-docosahexaenoate + CoA + H(+). It carries out the reaction (4Z,7Z,10Z,13Z,16Z,19Z)-docosahexaenoate(in) + ATP + H2O = (4Z,7Z,10Z,13Z,16Z,19Z)-docosahexaenoate(out) + ADP + phosphate + H(+). Broad substrate specificity ATP-dependent transporter of the ATP-binding cassette (ABC) family that catalyzes the transport of long-chain fatty acids (LCFA)-CoA, dicarboxylic acids-CoA, long-branched-chain fatty acids-CoA and bile acids from the cytosol to the peroxisome lumen for beta-oxydation. Has fatty acyl-CoA thioesterase and ATPase activities. Probably hydrolyzes fatty acyl-CoAs into free fatty acids prior to their ATP-dependent transport into peroxisomes. Thus, play a role in regulation of LCFAs and energy metabolism namely, in the degradation and biosynthesis of fatty acids by beta-oxidation. The polypeptide is ATP-binding cassette sub-family D member 3 (Abcd3) (Mus musculus (Mouse)).